The chain runs to 788 residues: Cell division cycle protein 27 homolog (788 aa).

The tract at residues 198-436 (YLDSPASSLK…PLPSVASSLN (239 aa)) is disordered. The span at 217–229 (GPSSSSAASTAEP) shows a compositional bias: low complexity. 3 stretches are compositionally biased toward polar residues: residues 241–273 (RGTIASANRETRNTTSNITPRQSTPGSTPSRIN), 293–303 (SSVTGSRSSLF), and 319–360 (NRAN…NPVR). Positions 366–378 (ADAAAAANKTAKT) are enriched in low complexity. Positions 391 to 414 (VSRNSNLARSLSGSTNSVASTASE) are enriched in polar residues. TPR repeat units lie at residues 561–594 (PQSWCAAGNCFSLQRQHTQAIECMERAIQLDKRF), 596–628 (YAYTLLGHELIVQDELDKAAGSFRSALLLSPRD), 629–662 (YRAWYGLGLVHLKKEQNLTALTNIQKAVNINPTN), 664–696 (AMLCTLSQIEQQRGQIDTALVLIDRALTLNPLD), and 731–764 (AFIFHLLARVHRRMGNTHLALLNYSWAAELDPRG).

The protein belongs to the APC3/CDC27 family. As to quaternary structure, the APC/C complex is probably composed of at least 12 subunits: apc-2, apc-10, apc-11, cdc-26, emb-1, emb-27, emb-30, mat-1, mat-2, mat-3, such-1 and gfi-3. As to expression, expressed in the ventral nerve cord.

Its subcellular location is the nucleus. The protein operates within protein modification; protein ubiquitination. In terms of biological role, probable component of the anaphase promoting complex/cyclosome (APC/C), a cell cycle-regulated E3 ubiquitin ligase that controls progression through mitosis and the G1 phase of the cell cycle. The APC/C complex acts by mediating ubiquitination and subsequent degradation of target proteins. Developmental role in early embryogenesis and the metaphase to anaphase transition in oocyte and spermatocyte meiosis and mitosis in germ cells. Required for embryonic anterior-posterior axis formation. Plays a role in regulating the abundance of glr-1 receptors in postmitotic neurons, which may in turn control animal locomotion. The chain is Cell division cycle protein 27 homolog from Caenorhabditis elegans.